The following is a 434-amino-acid chain: Serine hydroxymethyltransferase (434 aa).

Residues Leu133 and 137 to 139 (GHL) contribute to the (6S)-5,6,7,8-tetrahydrofolate site. Lys242 bears the N6-(pyridoxal phosphate)lysine mark.

This sequence belongs to the SHMT family. Homodimer. Pyridoxal 5'-phosphate serves as cofactor.

The protein localises to the cytoplasm. It catalyses the reaction (6R)-5,10-methylene-5,6,7,8-tetrahydrofolate + glycine + H2O = (6S)-5,6,7,8-tetrahydrofolate + L-serine. It functions in the pathway one-carbon metabolism; tetrahydrofolate interconversion. The protein operates within amino-acid biosynthesis; glycine biosynthesis; glycine from L-serine: step 1/1. Functionally, catalyzes the reversible interconversion of serine and glycine with tetrahydrofolate (THF) serving as the one-carbon carrier. This reaction serves as the major source of one-carbon groups required for the biosynthesis of purines, thymidylate, methionine, and other important biomolecules. Also exhibits THF-independent aldolase activity toward beta-hydroxyamino acids, producing glycine and aldehydes, via a retro-aldol mechanism. This is Serine hydroxymethyltransferase from Methylorubrum populi (strain ATCC BAA-705 / NCIMB 13946 / BJ001) (Methylobacterium populi).